The primary structure comprises 186 residues: MKMLYDLAKKRKTVRRFKKEKPPLEDLIYSLKVANEAPSGMNAQPWRFLIVEDEKLKGQIRRVCERSEKTFYENVRGRLKEWLDEKRFTWRKPFLKEAPYLLLVFSEKSAPYSRESVWLAVGYLLLALEEKGLGSVPYTPPDFREVEKLVNTPSELRLEVILPVGYPDDPKPKYPRNEVIVRYNTF.

Residues 11 to 15 (RKTVR), 38 to 39 (PS), and Ser39 each bind FMN. Positions 41, 68, 72, and 92 each coordinate 3-iodo-L-tyrosine. The L-tyrosine site is built by Met41, Glu68, Tyr72, and Lys92. Residue Arg176 participates in FMN binding.

This sequence belongs to the nitroreductase family. Homodimer. FMN serves as cofactor.

It carries out the reaction 2 iodide + L-tyrosine + 2 NADP(+) = 3,5-diiodo-L-tyrosine + 2 NADPH + H(+). The enzyme catalyses iodide + L-tyrosine + NADP(+) = 3-iodo-L-tyrosine + NADPH. The catalysed reaction is 3-iodo-L-tyrosine + iodide + NADP(+) = 3,5-diiodo-L-tyrosine + NADPH + H(+). It catalyses the reaction L-tyrosine + chloride + NADP(+) = 3-chloro-L-tyrosine + NADPH. It carries out the reaction bromide + L-tyrosine + NADP(+) = 3-bromo-L-tyrosine + NADPH. In terms of biological role, catalyzes the dehalogenation of halotyrosines such as 3-bromo-L-tyrosine, 3-chloro-L-tyrosine, 3-iodo-L-tyrosine and 3,5-diiodo-L-tyrosine. Activity towards 2-iodophenol is weak. The sequence is that of Iodotyrosine deiodinase from Thermotoga neapolitana (strain ATCC 49049 / DSM 4359 / NBRC 107923 / NS-E).